Here is a 437-residue protein sequence, read N- to C-terminus: Enolase 1 (437 aa).

Glutamine 164 contributes to the (2R)-2-phosphoglycerate binding site. Residue glutamate 206 is the Proton donor of the active site. Mg(2+) is bound by residues aspartate 244, glutamate 289, and aspartate 316. Lysine 341, arginine 370, serine 371, and lysine 392 together coordinate (2R)-2-phosphoglycerate. Lysine 341 serves as the catalytic Proton acceptor.

This sequence belongs to the enolase family. The cofactor is Mg(2+).

The protein resides in the cytoplasm. It localises to the secreted. It is found in the cell surface. It catalyses the reaction (2R)-2-phosphoglycerate = phosphoenolpyruvate + H2O. It functions in the pathway carbohydrate degradation; glycolysis; pyruvate from D-glyceraldehyde 3-phosphate: step 4/5. Catalyzes the reversible conversion of 2-phosphoglycerate (2-PG) into phosphoenolpyruvate (PEP). It is essential for the degradation of carbohydrates via glycolysis. The protein is Enolase 1 of Desulfitobacterium hafniense (strain Y51).